A 56-amino-acid polypeptide reads, in one-letter code: Large ribosomal subunit protein eL40 (56 aa).

The protein belongs to the eukaryotic ribosomal protein eL40 family.

The protein is Large ribosomal subunit protein eL40 of Sulfurisphaera tokodaii (strain DSM 16993 / JCM 10545 / NBRC 100140 / 7) (Sulfolobus tokodaii).